The primary structure comprises 504 residues: Cytochrome P450 6B6 (504 aa).

Position 445 (Cys445) interacts with heme.

It belongs to the cytochrome P450 family. The cofactor is heme.

Its subcellular location is the endoplasmic reticulum membrane. It is found in the microsome membrane. The catalysed reaction is an organic molecule + reduced [NADPH--hemoprotein reductase] + O2 = an alcohol + oxidized [NADPH--hemoprotein reductase] + H2O + H(+). The polypeptide is Cytochrome P450 6B6 (CYP6B6) (Helicoverpa armigera (Cotton bollworm)).